A 208-amino-acid chain; its full sequence is Small ribosomal subunit protein uS5 (208 aa).

The segment at 1-38 (MPGRERRDGGRSADDNQKKNDRRGGRRDDRRNQQQDER) is disordered. The region spanning 41–104 (YIERVVTINR…EEARKNFFRV (64 aa)) is the S5 DRBM domain.

The protein belongs to the universal ribosomal protein uS5 family. As to quaternary structure, part of the 30S ribosomal subunit. Contacts proteins S4 and S8.

Functionally, with S4 and S12 plays an important role in translational accuracy. Located at the back of the 30S subunit body where it stabilizes the conformation of the head with respect to the body. In Corynebacterium diphtheriae (strain ATCC 700971 / NCTC 13129 / Biotype gravis), this protein is Small ribosomal subunit protein uS5.